Here is a 57-residue protein sequence, read N- to C-terminus: Large ribosomal subunit protein bL32 (57 aa).

Belongs to the bacterial ribosomal protein bL32 family.

This is Large ribosomal subunit protein bL32 from Streptomyces griseus subsp. griseus (strain JCM 4626 / CBS 651.72 / NBRC 13350 / KCC S-0626 / ISP 5235).